The primary structure comprises 961 residues: Endochitinase A (961 aa).

Positions 1 to 21 are cleaved as a signal peptide; that stretch reads MAPKLFTFVSALSGLASLASA. Residues 28 to 339 enclose the GH18 domain; that stretch reads SNIAVYYGQG…EKIREILYDL (312 aa). Catalysis depends on Glu-175, which acts as the Proton donor. Disordered regions lie at residues 338-720, 767-787, 813-842, and 912-933; these read DLDP…TTTE, TDVPGSGSGSSPAQPTITADI, PPATTTEESTSAQPTGEVPSSDGSGSGEVS, and HVPVPSGSGSSPSGTQGGASPT. Positions 342–355 are enriched in pro residues; sequence NHPPPTTSPTPTPT. Low complexity-rich tracts occupy residues 356-510, 519-544, 552-604, and 612-635; these read PSTT…STSS, SSTSVPATSSSVPSSAISPSSTPVIS, TSSS…PETT, and TPGSSVSTGTTSASTLSSSVPATS. Over residues 636 to 665 the composition is skewed to polar residues; it reads GGHTETSTVSTSSANQTPSASTSKPLIPTN. Residues 666-720 show a composition bias toward low complexity; it reads SASSTSTGSVTSTPSAPGVPSSSAGSDETATTSTTDSEPTSTSSGSVTAKPTTTE. The GPI-anchor amidated glycine moiety is linked to residue Gly-936. A propeptide spans 937-961 (removed in mature form); that stretch reads AGSRYDVVKGVPALVALALSLLAVL.

The protein belongs to the glycosyl hydrolase 18 family. Chitinase class III subfamily. Post-translationally, O-glycosylated but not N-glycosylated.

It localises to the cell membrane. It is found in the secreted. The protein resides in the cell wall. The protein localises to the cell tip. It catalyses the reaction Random endo-hydrolysis of N-acetyl-beta-D-glucosaminide (1-&gt;4)-beta-linkages in chitin and chitodextrins.. GPI-anchored chitinase involved in the degradation of chitin, a component of the cell walls of fungi and exoskeletal elements of some animals (including worms and arthropods). Required to reshape the cell wall at the sites where cell wall remodeling and/or cell wall maturation actively take place such as sites of conidia formation. In Emericella nidulans (Aspergillus nidulans), this protein is Endochitinase A (chiA).